The chain runs to 145 residues: 3-hydroxyacyl-[acyl-carrier-protein] dehydratase FabZ (145 aa).

His48 is a catalytic residue.

This sequence belongs to the thioester dehydratase family. FabZ subfamily.

The protein resides in the cytoplasm. The enzyme catalyses a (3R)-hydroxyacyl-[ACP] = a (2E)-enoyl-[ACP] + H2O. In terms of biological role, involved in unsaturated fatty acids biosynthesis. Catalyzes the dehydration of short chain beta-hydroxyacyl-ACPs and long chain saturated and unsaturated beta-hydroxyacyl-ACPs. This is 3-hydroxyacyl-[acyl-carrier-protein] dehydratase FabZ from Campylobacter hominis (strain ATCC BAA-381 / DSM 21671 / CCUG 45161 / LMG 19568 / NCTC 13146 / CH001A).